A 193-amino-acid chain; its full sequence is UPF0301 protein Bfl251 (193 aa).

Belongs to the UPF0301 (AlgH) family.

This is UPF0301 protein Bfl251 from Blochmanniella floridana.